The chain runs to 545 residues: Chaperonin GroEL (545 aa).

Residues 30–33 (TLGP), Lys-51, 87–91 (DGTTT), Gly-415, and Asp-496 contribute to the ATP site.

This sequence belongs to the chaperonin (HSP60) family. In terms of assembly, forms a cylinder of 14 subunits composed of two heptameric rings stacked back-to-back. Interacts with the co-chaperonin GroES.

Its subcellular location is the cytoplasm. It catalyses the reaction ATP + H2O + a folded polypeptide = ADP + phosphate + an unfolded polypeptide.. Its function is as follows. Together with its co-chaperonin GroES, plays an essential role in assisting protein folding. The GroEL-GroES system forms a nano-cage that allows encapsulation of the non-native substrate proteins and provides a physical environment optimized to promote and accelerate protein folding. The sequence is that of Chaperonin GroEL from Haemophilus influenzae (strain 86-028NP).